A 1256-amino-acid polypeptide reads, in one-letter code: Neuronal cell adhesion molecule (1256 aa).

The first 29 residues, 1-29 (MQLKIMPKKKHLSAGGVPLILFLCQMISA), serve as a signal peptide directing secretion. The Extracellular portion of the chain corresponds to 30 to 1119 (LDVPLDLVQP…ASRQVDIATQ (1090 aa)). Ig-like C2-type domains follow at residues 40-128 (PTIT…AAVS) and 135-229 (PSRS…QPIS). 2 cysteine pairs are disulfide-bonded: Cys62/Cys117 and Cys161/Cys212. An N-linked (GlcNAc...) asparagine glycan is attached at Asn77. Residues Asn217, Asn239, Asn245, Asn270, Asn308, and Asn371 are each glycosylated (N-linked (GlcNAc...) asparagine). Ig-like C2-type domains follow at residues 261 to 350 (PPTF…ISVT), 355 to 442 (PYWI…AFVN), 448 to 535 (PRIL…VHLE), and 539 to 626 (PTRI…AVLR). Residues Cys286 and Cys334 are joined by a disulfide bond. Cysteines 376 and 426 form a disulfide. N-linked (GlcNAc...) asparagine glycosylation is found at Asn427 and Asn501. Intrachain disulfides connect Cys470–Cys519 and Cys561–Cys610. N-linked (GlcNAc...) asparagine glycans are attached at residues Asn613, Asn710, Asn796, Asn852, Asn987, Asn1003, Asn1013, and Asn1067. Fibronectin type-III domains are found at residues 643–738 (PPFD…TKAA), 740–837 (PDQN…SGED), 842–944 (APGN…TPEG), and 948–1045 (APSS…VDEA). Residues 1120–1142 (GWFIGLMCAVALLILILLIVCFI) traverse the membrane as a helical segment. At 1143–1256 (RRNKGGKYPV…SPVNAMNSFV (114 aa)) the chain is on the cytoplasmic side. The span at 1151–1171 (PVKEKEDAHADPEIQPMKEDD) shows a compositional bias: basic and acidic residues. Positions 1151–1256 (PVKEKEDAHA…SPVNAMNSFV (106 aa)) are disordered. Thr1173 carries the post-translational modification Phosphothreonine. Tyr1177 carries the phosphotyrosine modification. Position 1178 is a phosphoserine (Ser1178). The segment covering 1193-1202 (PSDRTVKKED) has biased composition (basic and acidic residues). Residues Ser1203, Ser1206, Ser1223, Ser1242, Ser1243, and Ser1247 each carry the phosphoserine modification. Positions 1240–1256 (NESSEAPSPVNAMNSFV) are enriched in polar residues.

The protein belongs to the immunoglobulin superfamily. L1/neurofascin/NgCAM family. Constituent of a NFASC/NRCAM/ankyrin-G complex. Detected in a complex with CNTN1 and PTPRB. Interacts with GLDN/gliomedin and MYOC. As to expression, detected in sciatic nerve. Detected in brain, especially in the cerebellum Purkinje cell layer, inner granule cell layer and molecular layer (at protein level). Detected in neurons and Schwann cells.

Its subcellular location is the cell membrane. It localises to the cell projection. The protein localises to the axon. The protein resides in the secreted. Cell adhesion protein that is required for normal responses to cell-cell contacts in brain and in the peripheral nervous system. Plays a role in neurite outgrowth in response to contactin binding. Plays a role in mediating cell-cell contacts between Schwann cells and axons. Plays a role in the formation and maintenance of the nodes of Ranvier on myelinated axons. Nodes of Ranvier contain clustered sodium channels that are crucial for the saltatory propagation of action potentials along myelinated axons. During development, nodes of Ranvier are formed by the fusion of two heminodes. Required for normal clustering of sodium channels at heminodes; not required for the formation of mature nodes with normal sodium channel clusters. Required, together with GLDN, for maintaining NFASC and sodium channel clusters at mature nodes of Ranvier. In Mus musculus (Mouse), this protein is Neuronal cell adhesion molecule (Nrcam).